Consider the following 195-residue polypeptide: Thymidine kinase (195 aa).

ATP-binding positions include 8-15 (GLMGSGKS) and 86-89 (DESQ). Catalysis depends on E87, which acts as the Proton acceptor. Zn(2+)-binding residues include C146, C151, C184, and H187.

The protein belongs to the thymidine kinase family. As to quaternary structure, homotetramer.

It localises to the cytoplasm. It carries out the reaction thymidine + ATP = dTMP + ADP + H(+). The polypeptide is Thymidine kinase (tdk) (Bacillus subtilis subsp. natto).